Here is a 240-residue protein sequence, read N- to C-terminus: Uridylate kinase (240 aa).

An ATP-binding site is contributed by 13–16; it reads KFSG. Gly-55 contacts UMP. ATP contacts are provided by Gly-56 and Arg-60. Residues Asp-76 and 137–144 each bind UMP; that span reads TGNPFFTT. Residues Thr-164, Tyr-170, and Asp-173 each coordinate ATP.

Belongs to the UMP kinase family. Homohexamer.

The protein resides in the cytoplasm. It carries out the reaction UMP + ATP = UDP + ADP. It participates in pyrimidine metabolism; CTP biosynthesis via de novo pathway; UDP from UMP (UMPK route): step 1/1. With respect to regulation, inhibited by UTP. In terms of biological role, catalyzes the reversible phosphorylation of UMP to UDP. In Helicobacter pylori (strain HPAG1), this protein is Uridylate kinase.